We begin with the raw amino-acid sequence, 178 residues long: DNA-directed RNA polymerase V subunit 7 (178 aa).

The protein belongs to the eukaryotic RPB7/RPC8 RNA polymerase subunit family. Component of the RNA polymerase V complex.

Its subcellular location is the nucleus. Functionally, DNA-dependent RNA polymerase catalyzes the transcription of DNA into RNA using the four ribonucleoside triphosphates as substrates. Component of RNA polymerase V involved in RNA-directed DNA methylation-dependent (RdDM) silencing of endogenous repeated sequences, including transposable elements. The protein is DNA-directed RNA polymerase V subunit 7 (NRPE7) of Arabidopsis thaliana (Mouse-ear cress).